We begin with the raw amino-acid sequence, 278 residues long: ADP-dependent (S)-NAD(P)H-hydrate dehydratase (278 aa).

The 273-residue stretch at 4-276 (DDDLVRQVIR…KAIPSWMKKL (273 aa)) folds into the YjeF C-terminal domain. (6S)-NADPHX is bound by residues Ala-39, Gly-102, and His-152. AMP is bound at residue Gly-216. Residue Asp-217 participates in (6S)-NADPHX binding.

This sequence belongs to the NnrD/CARKD family. In terms of assembly, homotetramer. Mg(2+) serves as cofactor.

The catalysed reaction is (6S)-NADHX + ADP = AMP + phosphate + NADH + H(+). It catalyses the reaction (6S)-NADPHX + ADP = AMP + phosphate + NADPH + H(+). Functionally, catalyzes the dehydration of the S-form of NAD(P)HX at the expense of ADP, which is converted to AMP. Together with NAD(P)HX epimerase, which catalyzes the epimerization of the S- and R-forms, the enzyme allows the repair of both epimers of NAD(P)HX, a damaged form of NAD(P)H that is a result of enzymatic or heat-dependent hydration. The polypeptide is ADP-dependent (S)-NAD(P)H-hydrate dehydratase (Streptococcus thermophilus).